The following is a 72-amino-acid chain: Translation initiation factor IF-1 (72 aa).

One can recognise an S1-like domain in the interval 1 to 72; sequence MAKEEAIEIE…SKGRITYRYK (72 aa).

The protein belongs to the IF-1 family. Component of the 30S ribosomal translation pre-initiation complex which assembles on the 30S ribosome in the order IF-2 and IF-3, IF-1 and N-formylmethionyl-tRNA(fMet); mRNA recruitment can occur at any time during PIC assembly.

It localises to the cytoplasm. Its function is as follows. One of the essential components for the initiation of protein synthesis. Stabilizes the binding of IF-2 and IF-3 on the 30S subunit to which N-formylmethionyl-tRNA(fMet) subsequently binds. Helps modulate mRNA selection, yielding the 30S pre-initiation complex (PIC). Upon addition of the 50S ribosomal subunit IF-1, IF-2 and IF-3 are released leaving the mature 70S translation initiation complex. This is Translation initiation factor IF-1 from Chlorobium luteolum (strain DSM 273 / BCRC 81028 / 2530) (Pelodictyon luteolum).